Here is a 164-residue protein sequence, read N- to C-terminus: Probable ubiquitin-conjugating enzyme E2 7 (164 aa).

One can recognise a UBC core domain in the interval 3-163 (QSSLLLKKQL…VAQCVRRSQE (161 aa)). Cys-88 serves as the catalytic Glycyl thioester intermediate.

Belongs to the ubiquitin-conjugating enzyme family.

The enzyme catalyses S-ubiquitinyl-[E1 ubiquitin-activating enzyme]-L-cysteine + [E2 ubiquitin-conjugating enzyme]-L-cysteine = [E1 ubiquitin-activating enzyme]-L-cysteine + S-ubiquitinyl-[E2 ubiquitin-conjugating enzyme]-L-cysteine.. The protein operates within protein modification; protein ubiquitination. Its function is as follows. Catalyzes the covalent attachment of ubiquitin to other proteins. The chain is Probable ubiquitin-conjugating enzyme E2 7 (ubc-7) from Caenorhabditis elegans.